The following is a 114-amino-acid chain: Protein vCCL3 (114 aa).

The N-terminal stretch at 1 to 26 (MWSMCWVLRAHLGLLFWVAVIELCAA) is a signal peptide.

Its function is as follows. Acts as a highly selective agonist for human lymphoactin receptor XCR1. The protein is Protein vCCL3 (K4.1) of Human herpesvirus 8 type P (isolate GK18) (HHV-8).